Here is a 148-residue protein sequence, read N- to C-terminus: uncharacterized protein (148 aa).

The span at 37 to 94 (NNNNYNNNNKNNNNNNNNNNNNNNNNNNNNNNNYINSCNSNNNNNNNNNNTKNNNINS) shows a compositional bias: low complexity. Residues 37 to 99 (NNNNYNNNNK…NNINSRTDKN (63 aa)) form a disordered region.

This is an uncharacterized protein from Dictyostelium discoideum (Social amoeba).